Here is a 344-residue protein sequence, read N- to C-terminus: Melanocyte-stimulating hormone receptor (344 aa).

Over 1 to 37 (MPMQGAQRKLLGSLNSTPTATSNPGLAANHTGAPCLE) the chain is Extracellular. An N-linked (GlcNAc...) asparagine glycan is attached at asparagine 29. A helical transmembrane segment spans residues 38-63 (VSIPDGLFLSLGLVSLVENVLVVAAI). The Cytoplasmic portion of the chain corresponds to 64–72 (AKNRNLHSS). The helical transmembrane segment at 73 to 93 (MYYFICCLALSDLLVSGSNML) threads the bilayer. The Extracellular portion of the chain corresponds to 94–118 (ETAIILLLEAGTLATRASVVQQLHN). Residues 119 to 140 (TIDVLTCSSMLCSLCFLGAIAV) form a helical membrane-spanning segment. The Cytoplasmic segment spans residues 141 to 163 (DRYISIFYALRYHSIMTLPRAQR). The helical transmembrane segment at 164–183 (AIAAIWVASVLSSTLFITYY) threads the bilayer. Residues 184–191 (DHAAVLLC) are Extracellular-facing. The chain crosses the membrane as a helical span at residues 192-211 (LVVFFLAMLVLMAVLYVHML). Residues 212–240 (ARACQHAQGIIRLHNRQLPAHKGFGLRGA) lie on the Cytoplasmic side of the membrane. Residues 241–266 (ATLTILLGIFFLCWGPFFLHLTLVVF) form a helical membrane-spanning segment. At 267–279 (CPQHLTCNCIFKN) the chain is on the extracellular side. Residues 280–300 (FKVFLTLIICNTIIDPLIYAF) traverse the membrane as a helical segment. Topologically, residues 301-344 (RSQELRRTLKEVLLCSSWPGCWAEGGGDSVWPGSCVTLRGPLPP) are cytoplasmic. The S-palmitoyl cysteine moiety is linked to residue cysteine 315.

Belongs to the G-protein coupled receptor 1 family. In terms of assembly, interacts with MGRN1, but does not undergo MGRN1-mediated ubiquitination; this interaction competes with GNAS-binding and thus inhibits agonist-induced cAMP production. Interacts with OPN3; the interaction results in a decrease in MC1R-mediated cAMP signaling and ultimately a decrease in melanin production in melanocytes.

The protein resides in the cell membrane. Its function is as follows. Receptor for MSH (alpha, beta and gamma) and ACTH. The activity of this receptor is mediated by G proteins which activate adenylate cyclase. Mediates melanogenesis, the production of eumelanin (black/brown) and phaeomelanin (red/yellow), via regulation of cAMP signaling in melanocytes. The chain is Melanocyte-stimulating hormone receptor (MC1R) from Callithrix jacchus (White-tufted-ear marmoset).